A 248-amino-acid polypeptide reads, in one-letter code: MILLISDLHLEEERPDITRAFLDLLAGRARSASALYILGDFFEAWIGDDAMTPFQRSICQALRELSDSGTAIFLMHGNRDFMLGKAFCKQAGCTLLKDPSVVQFYGEPVLLMHGDSLCTRDESYMKLRRYLRNPLSLFILRNLPLRTRHKLARKLRSESRAQTRMKANDIVDVTPEEIPRIMQEYGVKTLVHGHTHRPAIHKLQIGDQAAKRIVLGDWDRQGWALQVDENGFALAPFDFAPPLALPHG.

Residues Asp7, His9, Asp40, Asn78, and His113 each coordinate Mn(2+). 78–79 (NR) serves as a coordination point for substrate. 5 residues coordinate substrate: Asp121, Ser159, Thr163, Lys166, and His194. Mn(2+) is bound by residues His194 and His196.

This sequence belongs to the LpxH family. It depends on Mn(2+) as a cofactor.

The protein resides in the cell inner membrane. The catalysed reaction is UDP-2-N,3-O-bis[(3R)-3-hydroxytetradecanoyl]-alpha-D-glucosamine + H2O = 2-N,3-O-bis[(3R)-3-hydroxytetradecanoyl]-alpha-D-glucosaminyl 1-phosphate + UMP + 2 H(+). It functions in the pathway glycolipid biosynthesis; lipid IV(A) biosynthesis; lipid IV(A) from (3R)-3-hydroxytetradecanoyl-[acyl-carrier-protein] and UDP-N-acetyl-alpha-D-glucosamine: step 4/6. Functionally, hydrolyzes the pyrophosphate bond of UDP-2,3-diacylglucosamine to yield 2,3-diacylglucosamine 1-phosphate (lipid X) and UMP by catalyzing the attack of water at the alpha-P atom. Involved in the biosynthesis of lipid A, a phosphorylated glycolipid that anchors the lipopolysaccharide to the outer membrane of the cell. The sequence is that of UDP-2,3-diacylglucosamine hydrolase from Pseudomonas fluorescens (strain Pf0-1).